Consider the following 34-residue polypeptide: Photosystem II reaction center protein Y (34 aa).

The Lumenal segment spans residues 1–5 (DWRVL). A helical membrane pass occupies residues 6–22 (VVLLPVLLAAGWAVRNI). Topologically, residues 23–34 (LPYAVKQVQKLL) are cytoplasmic.

It belongs to the PsbY family. As to quaternary structure, PSII is composed of 1 copy each of membrane proteins PsbA, PsbB, PsbC, PsbD, PsbE, PsbF, PsbH, PsbI, PsbJ, PsbK, PsbL, PsbM, PsbT, PsbX, PsbY, PsbZ, Psb30/Ycf12, peripheral proteins PsbO, CyanoQ (PsbQ), PsbU, PsbV and a large number of cofactors. It forms dimeric complexes. This protein is only loosely associated with PSII, and is not often found in crystals. The cofactor is PSII binds multiple chlorophylls, carotenoids and specific lipids..

It is found in the cellular thylakoid membrane. Loosely associated component of the core of photosystem II (PSII). PSII is a light-driven water plastoquinone oxidoreductase, using light energy to abstract electrons from H(2)O, generating a proton gradient subsequently used for ATP formation. This is Photosystem II reaction center protein Y from Thermostichus vulcanus (Synechococcus vulcanus).